The sequence spans 734 residues: Photosystem I P700 chlorophyll a apoprotein A2 (734 aa).

The next 8 helical transmembrane spans lie at 46-69, 135-158, 175-199, 273-291, 330-353, 369-395, 417-439, and 517-535; these read IFAS…FHVA, LYFG…LHLQ, LNHH…HVAI, IAHH…GHMY, LHMQ…QHMY, AALY…IFFV, AIIS…LYIH, and FLVH…LILV. [4Fe-4S] cluster contacts are provided by C559 and C568. 2 consecutive transmembrane segments (helical) span residues 575–596 and 643–665; these read AFYL…YWHW and QAVW…MFLI. Positions 654, 662, and 670 each coordinate chlorophyll a. W671 contacts phylloquinone. A helical transmembrane segment spans residues 707–727; sequence LVGLAHFTVGFIFTFAPFVIA.

Belongs to the PsaA/PsaB family. In terms of assembly, the PsaA/B heterodimer binds the P700 chlorophyll special pair and subsequent electron acceptors. PSI consists of a core antenna complex that captures photons, and an electron transfer chain that converts photonic excitation into a charge separation. The eukaryotic PSI reaction center is composed of at least 11 subunits. The cofactor is P700 is a chlorophyll a/chlorophyll a' dimer, A0 is one or more chlorophyll a, A1 is one or both phylloquinones and FX is a shared 4Fe-4S iron-sulfur center..

The protein localises to the plastid. It is found in the chloroplast thylakoid membrane. It catalyses the reaction reduced [plastocyanin] + hnu + oxidized [2Fe-2S]-[ferredoxin] = oxidized [plastocyanin] + reduced [2Fe-2S]-[ferredoxin]. PsaA and PsaB bind P700, the primary electron donor of photosystem I (PSI), as well as the electron acceptors A0, A1 and FX. PSI is a plastocyanin/cytochrome c6-ferredoxin oxidoreductase, converting photonic excitation into a charge separation, which transfers an electron from the donor P700 chlorophyll pair to the spectroscopically characterized acceptors A0, A1, FX, FA and FB in turn. Oxidized P700 is reduced on the lumenal side of the thylakoid membrane by plastocyanin or cytochrome c6. In Emiliania huxleyi (Coccolithophore), this protein is Photosystem I P700 chlorophyll a apoprotein A2.